The chain runs to 63 residues: Large ribosomal subunit protein bL35 (63 aa).

Residues Gly-26 to Leu-50 form a disordered region.

It belongs to the bacterial ribosomal protein bL35 family.

This chain is Large ribosomal subunit protein bL35, found in Bifidobacterium animalis subsp. lactis (strain AD011).